A 303-amino-acid polypeptide reads, in one-letter code: Oxygen-dependent coproporphyrinogen-III oxidase (303 aa).

Serine 93 provides a ligand contact to substrate. Residues histidine 97 and histidine 107 each coordinate a divalent metal cation. The active-site Proton donor is the histidine 107. Residue 109–111 (NVR) participates in substrate binding. Residues histidine 146 and histidine 176 each contribute to the a divalent metal cation site. Residues 241–276 (YVEFNLVYDRGTLFGLQSGGRTESILMSLPPQVRWG) are important for dimerization. A substrate-binding site is contributed by 259–261 (GGR).

The protein belongs to the aerobic coproporphyrinogen-III oxidase family. Homodimer. A divalent metal cation serves as cofactor.

It localises to the cytoplasm. The enzyme catalyses coproporphyrinogen III + O2 + 2 H(+) = protoporphyrinogen IX + 2 CO2 + 2 H2O. It functions in the pathway porphyrin-containing compound metabolism; protoporphyrin-IX biosynthesis; protoporphyrinogen-IX from coproporphyrinogen-III (O2 route): step 1/1. Functionally, involved in the heme biosynthesis. Catalyzes the aerobic oxidative decarboxylation of propionate groups of rings A and B of coproporphyrinogen-III to yield the vinyl groups in protoporphyrinogen-IX. This is Oxygen-dependent coproporphyrinogen-III oxidase from Pseudomonas putida (strain W619).